The following is a 141-amino-acid chain: MSITVLAFDFGTKSIGCAVGQSITGTAQALPAFKAQDGIPDWLKIEKCLKDWQPNIVVVGLPLNMDGSEQDLTHLARKFANRLNGRFGVKVELQDERLTTKQARDEIFQRGGYRALKKEKVDSISACLILESWFENGACGE.

This sequence belongs to the YqgF nuclease family.

It localises to the cytoplasm. In terms of biological role, could be a nuclease involved in processing of the 5'-end of pre-16S rRNA. The polypeptide is Putative pre-16S rRNA nuclease (Histophilus somni (strain 129Pt) (Haemophilus somnus)).